Reading from the N-terminus, the 192-residue chain is Mitochondrial import inner membrane translocase subunit Tim22 (192 aa).

Cystine bridges form between C67-C139 and C158-C177. A run of 3 helical transmembrane segments spans residues 72–92 (VLAC…TAGI), 123–141 (YAKN…ECLV), and 168–188 (AGVK…AAID).

It belongs to the Tim17/Tim22/Tim23 family. Component of the TIM22 complex, whose core is composed of TIMM22, associated with peripheral protein FXC1/TIMM10B and the 70 kDa heterohexamer. In most cases, the 70 kDa complex is composed of TIMM9 and TIMM10 (TIMM10A or TIMM10B). A small fraction of the 70 kDa complex is composed of TIMM8 (TIMM8A/DDP1 or TIMM8B/DDP2) and TIMM13. The TIM22 complex also contains AGK and TIMM29. Interacts directly with TIMM9, TIMM10A and FXC1/TIMM10B. Interacts (when oxidized) with TIMM29; interaction is direct. Post-translationally, disulfide bonds promote efficient assembly of the TIM22 complex.

It localises to the mitochondrion inner membrane. Functionally, essential core component of the TIM22 complex, a complex that mediates the import and insertion of multi-pass transmembrane proteins into the mitochondrial inner membrane. In the TIM22 complex, it constitutes the voltage-activated and signal-gated channel. Forms a twin-pore translocase that uses the membrane potential as external driving force in 2 voltage-dependent steps. This Rattus norvegicus (Rat) protein is Mitochondrial import inner membrane translocase subunit Tim22 (Timm22).